A 157-amino-acid polypeptide reads, in one-letter code: Small ribosomal subunit protein uS7 (157 aa).

Belongs to the universal ribosomal protein uS7 family. As to quaternary structure, part of the 30S ribosomal subunit. Contacts proteins S9 and S11.

Functionally, one of the primary rRNA binding proteins, it binds directly to 16S rRNA where it nucleates assembly of the head domain of the 30S subunit. Is located at the subunit interface close to the decoding center, probably blocks exit of the E-site tRNA. The polypeptide is Small ribosomal subunit protein uS7 (Akkermansia muciniphila (strain ATCC BAA-835 / DSM 22959 / JCM 33894 / BCRC 81048 / CCUG 64013 / CIP 107961 / Muc)).